The following is a 130-amino-acid chain: uncharacterized protein (130 aa).

The interval 1-34 (MTAVGGSPPTRRCPATEDRAPATVATPSSTDPTA) is disordered.

The protein to M.tuberculosis Rv1583c.

This is an uncharacterized protein from Mycobacterium tuberculosis (strain CDC 1551 / Oshkosh).